The following is a 63-amino-acid chain: Large ribosomal subunit protein uL29 (63 aa).

This sequence belongs to the universal ribosomal protein uL29 family.

The sequence is that of Large ribosomal subunit protein uL29 from Chromohalobacter salexigens (strain ATCC BAA-138 / DSM 3043 / CIP 106854 / NCIMB 13768 / 1H11).